Consider the following 530-residue polypeptide: Na(+)/H(+) antiporter NhaB (530 aa).

The next 12 helical transmembrane spans lie at 13–33, 34–54, 90–110, 121–141, 145–165, 205–225, 241–261, 306–326, 327–347, 351–371, 455–475, and 481–501; these read FLGK…VINP, LVFF…EFIF, LVAN…IYFM, ILIG…TAAF, FLDA…FYAI, LLIH…VGEP, FIIR…LTCI, GLIA…VGLI, GLSV…HSMG, EEAL…AVII, GQAA…QLSY, and MALP…IFFL.

Belongs to the NhaB Na(+)/H(+) (TC 2.A.34) antiporter family.

The protein localises to the cell inner membrane. It catalyses the reaction 2 Na(+)(in) + 3 H(+)(out) = 2 Na(+)(out) + 3 H(+)(in). Its function is as follows. Na(+)/H(+) antiporter that extrudes sodium in exchange for external protons. This Aliivibrio fischeri (strain MJ11) (Vibrio fischeri) protein is Na(+)/H(+) antiporter NhaB.